The sequence spans 131 residues: Translation initiation factor 5A (131 aa).

A Hypusine modification is found at lysine 36.

It belongs to the eIF-5A family.

Its subcellular location is the cytoplasm. Functions by promoting the formation of the first peptide bond. In Metallosphaera sedula (strain ATCC 51363 / DSM 5348 / JCM 9185 / NBRC 15509 / TH2), this protein is Translation initiation factor 5A (eIF5A).